A 97-amino-acid chain; its full sequence is Co-chaperonin GroES (97 aa).

This sequence belongs to the GroES chaperonin family. Heptamer of 7 subunits arranged in a ring. Interacts with the chaperonin GroEL.

It localises to the cytoplasm. Functionally, together with the chaperonin GroEL, plays an essential role in assisting protein folding. The GroEL-GroES system forms a nano-cage that allows encapsulation of the non-native substrate proteins and provides a physical environment optimized to promote and accelerate protein folding. GroES binds to the apical surface of the GroEL ring, thereby capping the opening of the GroEL channel. This chain is Co-chaperonin GroES, found in Symbiobacterium thermophilum (strain DSM 24528 / JCM 14929 / IAM 14863 / T).